Reading from the N-terminus, the 257-residue chain is MAVIPIEERKFPKTLVLFDVDGTLTPARLSVSPEMLETLQNLRKVVAIGFVGGSDLSKQQEQLSVNGENVIDSFDYAFAENGLTAYRYGQQLASQSFIAWLGEEKYQKLVNFCLHYIADLDIPVKRGTFIEFRNGMINISPVGRNANTEERNEFERFDKGRKIRATMVDVLREKFKDYGLTFSIGGQISFDVFPAGWDKTYCLQHVEKEGFDTIHFFGDKTYKGGNDYEIFVDPRTIGHSVTNPDDTIAELKKIFNI.

The active-site Nucleophile is the D19. 2 residues coordinate Mg(2+): D19 and D21. The Proton donor/acceptor role is filled by D21. Alpha-D-mannose 1-phosphate is bound by residues R28, R133, R144, R151, S189, and D191. Mg(2+) contacts are provided by D219, F231, D233, and T236.

The protein belongs to the eukaryotic PMM family. As to quaternary structure, homodimer.

It localises to the cytoplasm. The enzyme catalyses alpha-D-mannose 1-phosphate = D-mannose 6-phosphate. The protein operates within nucleotide-sugar biosynthesis; GDP-alpha-D-mannose biosynthesis; alpha-D-mannose 1-phosphate from D-fructose 6-phosphate: step 2/2. Functionally, involved in the synthesis of the GDP-mannose and dolichol-phosphate-mannose required for a number of critical mannosyl transfer reactions. This is Phosphomannomutase (pmm1) from Schizosaccharomyces pombe (strain 972 / ATCC 24843) (Fission yeast).